A 654-amino-acid polypeptide reads, in one-letter code: Potassium voltage-gated channel subfamily A member 4 (654 aa).

The Cytoplasmic portion of the chain corresponds to 1–305; sequence MEVAMVSAES…LLFEYPESSS (305 aa). A disordered region spans residues 24 to 145; the sequence is QARARERERL…EEGRFYYSEE (122 aa). A compositionally biased stretch (low complexity) spans 36–50; it reads SRAAAAAAVAAATAA. A compositionally biased stretch (basic residues) spans 81 to 99; sequence GSRRRRRQRTEKKKLHHRQ. A Phosphoserine modification is found at serine 122. Residues 122-137 are compositionally biased toward acidic residues; sequence SEEEEDEEEEEEEEEE. The chain crosses the membrane as a helical span at residues 306–327; the sequence is PARGIAIVSVLVILISIVIFCL. Over 328–371 the chain is Extracellular; it reads ETLPEFRDDRDLIMALSAGGHSRLLNDTSAPHLENSGHTIFNDP. N-linked (GlcNAc...) asparagine glycosylation is present at asparagine 353. The helical transmembrane segment at 372–393 threads the bilayer; it reads FFIVETVCIVWFSFEFVVRCFA. Residues 394-404 are Cytoplasmic-facing; that stretch reads CPSQALFFKNI. A helical membrane pass occupies residues 405-425; the sequence is MNIIDIVSILPYFITLGTDLA. Over 426 to 440 the chain is Extracellular; sequence QQQGGGNGQQQQAMS. A helical; Voltage-sensor membrane pass occupies residues 441 to 461; the sequence is FAILRIIRLVRVFRIFKLSRH. The Cytoplasmic portion of the chain corresponds to 462–476; sequence SKGLQILGHTLRASM. The interval 463–476 is S4-S5 linker; that stretch reads KGLQILGHTLRASM. A helical transmembrane segment spans residues 477–498; sequence RELGLLIFFLFIGVILFSSAVY. Topologically, residues 499-512 are extracellular; the sequence is FAEADEPTTHFQSI. The helical intramembrane region spans 513-524; it reads PDAFWWAVVTMT. The Selectivity filter motif lies at 525–530; it reads TVGYGD. Residues 525-532 lie within the membrane without spanning it; that stretch reads TVGYGDMK. Topologically, residues 533 to 539 are extracellular; it reads PITVGGK. Residues 540-568 traverse the membrane as a helical segment; it reads IVGSLCAIAGVLTIALPVPVIVSNFNYFY. Residues 569 to 654 lie on the Cytoplasmic side of the membrane; sequence HRETENEEQT…SNAKAVETDV (86 aa). Serine 600 carries the post-translational modification Phosphoserine; by PKA. Positions 630-641 are enriched in basic and acidic residues; the sequence is CQGKGDESETDK. The segment at 630 to 654 is disordered; the sequence is CQGKGDESETDKNNCSNAKAVETDV. Positions 652 to 654 match the PDZ-binding motif; the sequence is TDV.

The protein belongs to the potassium channel family. A (Shaker) (TC 1.A.1.2) subfamily. Kv1.4/KCNA4 sub-subfamily. As to quaternary structure, homotetramer and heterotetramer of potassium channel proteins. Interacts with KCNAB1 and KCNAB2. Interacts with DLG1, DLG2 and DLG4 via their PDZ domains. Interacts with SIGMAR1. Detected in a complex with KCNA1. Interacts with KCNA2. Part of a complex containing KCNA1, KCNAB1 and LGI1. Interacts (via cytoplasmic N-terminal domain) with KCNRG. In terms of tissue distribution, expressed in the brain, lens and retina.

It is found in the cell membrane. It localises to the cell projection. The protein localises to the axon. It carries out the reaction K(+)(in) = K(+)(out). In terms of biological role, voltage-gated potassium channel that mediates transmembrane potassium transport in excitable membranes. Forms tetrameric potassium-selective channels through which potassium ions pass in accordance with their electrochemical gradient. The channel alternates between opened and closed conformations in response to the voltage difference across the membrane. Can form functional homotetrameric channels and heterotetrameric channels that contain variable proportions of KCNA1, KCNA2, KCNA4, KCNA5, and possibly other family members as well; channel properties depend on the type of alpha subunits that are part of the channel. Channel properties are modulated by cytoplasmic beta subunits that regulate the subcellular location of the alpha subunits and promote rapid inactivation. In vivo, membranes probably contain a mixture of heteromeric potassium channel complexes, making it difficult to assign currents observed in intact tissues to any particular potassium channel family member. Homotetrameric KCNA4 forms a potassium channel that opens in response to membrane depolarization, followed by rapid spontaneous channel closure. Likewise, a heterotetrameric channel formed by KCNA1 and KCNA4 shows rapid inactivation. The sequence is that of Potassium voltage-gated channel subfamily A member 4 (Kcna4) from Mus musculus (Mouse).